Here is a 218-residue protein sequence, read N- to C-terminus: Large ribosomal subunit protein uL3 (218 aa).

Belongs to the universal ribosomal protein uL3 family. Part of the 50S ribosomal subunit. Forms a cluster with proteins L14 and L19.

Its function is as follows. One of the primary rRNA binding proteins, it binds directly near the 3'-end of the 23S rRNA, where it nucleates assembly of the 50S subunit. The sequence is that of Large ribosomal subunit protein uL3 from Corynebacterium aurimucosum (strain ATCC 700975 / DSM 44827 / CIP 107346 / CN-1) (Corynebacterium nigricans).